The following is a 626-amino-acid chain: Colicin-Ia (626 aa).

The tract at residues 23 to 225 (EIMAVDIYVN…TRLSELEKNG (203 aa)) is translocation (T). The span at 276–286 (QQLTQQKNTPD) shows a compositional bias: polar residues. Residues 276 to 308 (QQLTQQKNTPDGKTIVSPEKFPGRSSTNHSIVV) are disordered. Positions 282–385 (KNTPDGKTIV…LRQRLLDARN (104 aa)) are receptor-binding (R). The segment at 450–626 (KDAINFTTEF…VEKANKFWGI (177 aa)) is channel (C). Helical transmembrane passes span 580-594 (ATAL…LTGS) and 597-612 (GIIG…GALI).

The protein belongs to the channel forming colicin family.

Its subcellular location is the cell membrane. Functionally, this colicin is a channel-forming colicin. This class of transmembrane toxins depolarize the cytoplasmic membrane, leading to dissipation of cellular energy. Its function is as follows. Colicins are polypeptide toxins produced by and active against E.coli and closely related bacteria. This is Colicin-Ia (cia) from Escherichia coli.